The primary structure comprises 441 residues: Ribulose bisphosphate carboxylase large chain (441 aa).

Substrate-binding residues include asparagine 89 and threonine 139. Lysine 141 serves as the catalytic Proton acceptor. Lysine 143 provides a ligand contact to substrate. Positions 167, 169, and 170 each coordinate Mg(2+). Lysine 167 is modified (N6-carboxylysine). Histidine 260 acts as the Proton acceptor in catalysis. Residues arginine 261, histidine 293, and serine 345 each contribute to the substrate site.

It belongs to the RuBisCO large chain family. Type I subfamily. As to quaternary structure, heterohexadecamer of 8 large chains and 8 small chains; disulfide-linked. The disulfide link is formed within the large subunit homodimers. Requires Mg(2+) as cofactor. Post-translationally, the disulfide bond which can form in the large chain dimeric partners within the hexadecamer appears to be associated with oxidative stress and protein turnover.

The protein localises to the plastid. It is found in the chloroplast. It carries out the reaction 2 (2R)-3-phosphoglycerate + 2 H(+) = D-ribulose 1,5-bisphosphate + CO2 + H2O. It catalyses the reaction D-ribulose 1,5-bisphosphate + O2 = 2-phosphoglycolate + (2R)-3-phosphoglycerate + 2 H(+). In terms of biological role, ruBisCO catalyzes two reactions: the carboxylation of D-ribulose 1,5-bisphosphate, the primary event in carbon dioxide fixation, as well as the oxidative fragmentation of the pentose substrate in the photorespiration process. Both reactions occur simultaneously and in competition at the same active site. In Fouquieria splendens (Ocotillo), this protein is Ribulose bisphosphate carboxylase large chain.